Consider the following 525-residue polypeptide: Bifunctional purine biosynthesis protein PurH (525 aa).

Residues 1–148 (MPSNNLIKNA…KNYKNVIVIV (148 aa)) form the MGS-like domain.

The protein belongs to the PurH family.

It carries out the reaction (6R)-10-formyltetrahydrofolate + 5-amino-1-(5-phospho-beta-D-ribosyl)imidazole-4-carboxamide = 5-formamido-1-(5-phospho-D-ribosyl)imidazole-4-carboxamide + (6S)-5,6,7,8-tetrahydrofolate. It catalyses the reaction IMP + H2O = 5-formamido-1-(5-phospho-D-ribosyl)imidazole-4-carboxamide. Its pathway is purine metabolism; IMP biosynthesis via de novo pathway; 5-formamido-1-(5-phospho-D-ribosyl)imidazole-4-carboxamide from 5-amino-1-(5-phospho-D-ribosyl)imidazole-4-carboxamide (10-formyl THF route): step 1/1. It participates in purine metabolism; IMP biosynthesis via de novo pathway; IMP from 5-formamido-1-(5-phospho-D-ribosyl)imidazole-4-carboxamide: step 1/1. The polypeptide is Bifunctional purine biosynthesis protein PurH (Buchnera aphidicola subsp. Acyrthosiphon pisum (strain APS) (Acyrthosiphon pisum symbiotic bacterium)).